The following is a 219-amino-acid chain: Mitochondrial fission factor homolog A (219 aa).

Over 1-199 (MAEINRMQYE…ENKERVKHEM (199 aa)) the chain is Cytoplasmic. Positions 164-194 (DLALADAASLRRQIIKLNRRLLLLEEENKER) form a coiled coil. A helical; Anchor for type IV membrane protein transmembrane segment spans residues 200–217 (TMYSIIIIFGLLNSWLWL). At 218 to 219 (RR) the chain is on the extracellular side.

It belongs to the Tango11 family.

Its subcellular location is the mitochondrion outer membrane. It localises to the peroxisome. It is found in the cytoplasmic vesicle. The protein localises to the secretory vesicle. The protein resides in the synaptic vesicle. In terms of biological role, plays a role in mitochondrial and peroxisomal fission. Promotes the recruitment and association of the fission mediator dynamin-related protein 1 (DNM1L) to the mitochondrial surface. The polypeptide is Mitochondrial fission factor homolog A (mff-a) (Xenopus laevis (African clawed frog)).